Reading from the N-terminus, the 479-residue chain is MILETTAKASQQYKVMPIMISLLLAGFIGMFSETALNIALTDLMKELNITAATVQWLTTGYLLVLGILVPVSGLLLQWFTTRQLFTVSLIFSILGTFIAALAPSFSFLLAARIVQALGTGLLLPLMFNTILVIFPPHKRGAAMGTIGLVIMFAPAIGPTFSGLVLEHLNWHWIFWISLPFLVLALVFGIAYMQNVSETTKPKIDVLSIILSTIGFGGIVFGFSNAGEGSGGWSSPTVIVSLIVGVVGLILFSIRQLTMKQPMMNLRAFKYPMFILGVIMVFICMMVILSSMLLLPMYLQGGLVLTAFASGLVLLPGGILNGFMSPVTGRLFDKYGPKWLVIPGFVIVTVVLWFFSNVTTTSTAVLIIILHTCLMIGISMIMMPAQTNGLNQLPREFYPDGTAIMNTLQQMAGAIGTAVAVSIMAAGQHDYMSTVKNPADPAVIPQALTAGVQHAFVFAMIVAIIGLIGAFFMKRVKVDH.

The next 14 helical transmembrane spans lie at 19–41 (MISL…IALT), 56–78 (WLTT…LLQW), 85–107 (FTVS…SFSF), 112–134 (RIVQ…LVIF), 141–160 (AAMG…GPTF), 170–192 (WHWI…IAYM), 205–222 (VLSI…VFGF), 232–251 (WSSP…LILF), 272–294 (MFIL…MLLL), 304–326 (LTAF…MSPV), 338–355 (WLVI…WFFS), 360–382 (TSTA…MIMM), 403–425 (IMNT…IMAA), and 449–471 (AGVQ…GAFF).

It belongs to the major facilitator superfamily. EmrB family.

The protein localises to the cell membrane. Functionally, proton-dependent transporter. May mediate the efflux of lincomycin. This is Lincomycin resistance protein LmrB (lmrB) from Bacillus subtilis (strain 168).